Here is a 56-residue protein sequence, read N- to C-terminus: Prokaryotic ubiquitin-like protein UBact (56 aa).

The disordered stretch occupies residues 1-56 (MPERIVKPMPQDPVTKPGDEGPRTPNVPKPDTERLLERMRRVDPRQAQRYRQRSGE). The span at 30-46 (PDTERLLERMRRVDPRQ) shows a compositional bias: basic and acidic residues. E56 is covalently cross-linked (Isoglutamyl lysine isopeptide (Glu-Lys) (interchain with K-? in acceptor proteins)).

Belongs to the ubiquitin-like protein UBact family.

Its function is as follows. May function as a protein modifier covalently attached to lysine residues of substrate proteins. This may serve to target the modified proteins for degradation by proteasomes. This is Prokaryotic ubiquitin-like protein UBact from Acetithermum autotrophicum.